Consider the following 394-residue polypeptide: Phosphoglycerate kinase (394 aa).

Residues 21-23, Arg-36, 59-62, Arg-118, and Arg-151 contribute to the substrate site; these read DFN and HLGR. At Ser-183 the chain carries Phosphoserine. Lys-201 serves as a coordination point for ATP. Residue Thr-299 is modified to Phosphothreonine. Residues Glu-323 and 350–353 each bind ATP; that span reads GGDS.

The protein belongs to the phosphoglycerate kinase family. Monomer.

The protein localises to the cytoplasm. It carries out the reaction (2R)-3-phosphoglycerate + ATP = (2R)-3-phospho-glyceroyl phosphate + ADP. It functions in the pathway carbohydrate degradation; glycolysis; pyruvate from D-glyceraldehyde 3-phosphate: step 2/5. The polypeptide is Phosphoglycerate kinase (Geobacillus sp. (strain WCH70)).